The primary structure comprises 118 residues: Small ribosomal subunit protein uS13 (118 aa).

The interval 94–118 (GLPLRGQRTKTNARTRKGPRKPIRK) is disordered.

Belongs to the universal ribosomal protein uS13 family. Part of the 30S ribosomal subunit. Forms a loose heterodimer with protein S19. Forms two bridges to the 50S subunit in the 70S ribosome.

Its function is as follows. Located at the top of the head of the 30S subunit, it contacts several helices of the 16S rRNA. In the 70S ribosome it contacts the 23S rRNA (bridge B1a) and protein L5 of the 50S subunit (bridge B1b), connecting the 2 subunits; these bridges are implicated in subunit movement. Contacts the tRNAs in the A and P-sites. This chain is Small ribosomal subunit protein uS13, found in Alcanivorax borkumensis (strain ATCC 700651 / DSM 11573 / NCIMB 13689 / SK2).